Reading from the N-terminus, the 342-residue chain is Antihemorrhagic factor HSF (342 aa).

Positions 1-19 (MNSLVALVLLGQIIGSTLS) are cleaved as a signal peptide. Cystatin fetuin-A-type domains lie at 22–130 (VRGD…VKCH) and 141–254 (RNCS…SNCV). The Cell attachment site motif lies at 23-25 (RGD). Residues 24 to 108 (GDLECDDKEA…RQQHNHAVEM (85 aa)) are indispensable for metalloproteinase inhibition. Cystine bridges form between Cys28–Cys332, Cys85–Cys96, Cys110–Cys129, Cys143–Cys146, Cys205–Cys217, and Cys230–Cys253. Residue Asn142 is glycosylated (N-linked (GlcNAc...) asparagine). A glycan (N-linked (GlcNAc...) asparagine) is linked at Asn204. Residue Asn282 is glycosylated (N-linked (GlcNAc...) asparagine).

This sequence belongs to the fetuin family. Post-translationally, cys-63 may exist in a mixed disulfide form with a thiol compound such as glutathione. In terms of tissue distribution, expressed by the liver.

It is found in the secreted. Functionally, inhibits hemorrhagic and proteolytic activities of metalloproteinases (HR1A, HR1B, HR2a, HR2b and H2 proteinase from T.flavodidis and brevilysins H3, H4, H6 and L4 from A.halys brevicaudus). Has no effect on brevilysins H2. Has no effect on papain and cathepsin-B. The polypeptide is Antihemorrhagic factor HSF (Protobothrops flavoviridis (Habu)).